The sequence spans 295 residues: Deoxyuridine 5'-triphosphate nucleotidohydrolase (295 aa).

178-180 (RSG) is a substrate binding site. Over residues 260 to 272 (NSVRKHTHEDNPV) the composition is skewed to basic and acidic residues. Residues 260–295 (NSVRKHTHEDNPVHEPNVATASADIRGTKGLGSSGF) form a disordered region.

This sequence belongs to the dUTPase family. It depends on Mg(2+) as a cofactor.

The catalysed reaction is dUTP + H2O = dUMP + diphosphate + H(+). Its function is as follows. Involved in nucleotide metabolism: produces dUMP, the immediate precursor of thymidine nucleotides and decreases the intracellular concentration of dUTP to avoid uracil incorporation into viral DNA. In Human herpesvirus 8 type P (isolate GK18) (HHV-8), this protein is Deoxyuridine 5'-triphosphate nucleotidohydrolase.